We begin with the raw amino-acid sequence, 436 residues long: UPF0761 membrane protein Bxeno_A3061 (436 aa).

The next 6 helical transmembrane spans lie at Leu42–Phe62, Gly96–Val116, Ile136–Ile156, Ala180–Leu200, Ala210–Tyr230, and Val241–Ile261.

This sequence belongs to the UPF0761 family.

Its subcellular location is the cell inner membrane. In Paraburkholderia xenovorans (strain LB400), this protein is UPF0761 membrane protein Bxeno_A3061.